The primary structure comprises 1023 residues: Protein FAM13A (1023 aa).

The Rho-GAP domain maps to 43–231; it reads VSLQELERQG…KILENYNTLF (189 aa). The disordered stretch occupies residues 269–290; it reads LERDMPKPPPKTKIPKSRSEGS. Ser-345 is modified (phosphoserine). Disordered stretches follow at residues 381–437 and 459–562; these read VNNS…SGFN and CAGE…EVPQ. Low complexity predominate over residues 384–405; sequence SGGQSSEDSESGTLSASSATSA. Basic and acidic residues-rich tracts occupy residues 412-427 and 509-524; these read SKEQDEVRHGRDKGLI and SDERKGNEKDGGHTQH. Positions 536 to 549 are enriched in polar residues; it reads PSLSDTKQQRNQDA. Phosphoserine occurs at positions 597 and 617. 2 disordered regions span residues 628–663 and 726–759; these read QYLDDTEVPPSPPNSHSFMRRRSSSLGSYDDEQEDL and ISEEDLTPRMRQRSNTLPKSFGSQLEKEDEKKQE. Positions 666–730 form a coiled coil; it reads AQLTRRIQSL…ESKLKISEED (65 aa). Ser-727 carries the post-translational modification Phosphoserine. At Thr-732 the chain carries Phosphothreonine. The segment covering 738 to 748 has biased composition (polar residues); sequence RSNTLPKSFGS. Residues 750–759 show a composition bias toward basic and acidic residues; the sequence is LEKEDEKKQE. Residues 946–978 adopt a coiled-coil conformation; sequence ASIPELLEHLQEMREEKKRIRKKLRDFEDNFFR.

This sequence belongs to the FAM13 family. In terms of tissue distribution, isoform 1 is widely expressed, with highest expression in skeletal muscle, thymus, brain and lung. Isoform 3 is less abundant than isoform 1 and predominantly expressed in kidney, pancreas, liver, lung and thymus.

The protein is Protein FAM13A (FAM13A) of Homo sapiens (Human).